Consider the following 484-residue polypeptide: Protein nucleotidyltransferase YdiU (484 aa).

ATP-binding residues include glycine 81, glycine 83, arginine 84, lysine 103, aspartate 115, glycine 116, arginine 166, and arginine 173. Aspartate 244 serves as the catalytic Proton acceptor. Mg(2+) contacts are provided by asparagine 245 and aspartate 254. Aspartate 254 is an ATP binding site.

This sequence belongs to the SELO family. Mg(2+) serves as cofactor. It depends on Mn(2+) as a cofactor.

It carries out the reaction L-seryl-[protein] + ATP = 3-O-(5'-adenylyl)-L-seryl-[protein] + diphosphate. The enzyme catalyses L-threonyl-[protein] + ATP = 3-O-(5'-adenylyl)-L-threonyl-[protein] + diphosphate. The catalysed reaction is L-tyrosyl-[protein] + ATP = O-(5'-adenylyl)-L-tyrosyl-[protein] + diphosphate. It catalyses the reaction L-histidyl-[protein] + UTP = N(tele)-(5'-uridylyl)-L-histidyl-[protein] + diphosphate. It carries out the reaction L-seryl-[protein] + UTP = O-(5'-uridylyl)-L-seryl-[protein] + diphosphate. The enzyme catalyses L-tyrosyl-[protein] + UTP = O-(5'-uridylyl)-L-tyrosyl-[protein] + diphosphate. Its function is as follows. Nucleotidyltransferase involved in the post-translational modification of proteins. It can catalyze the addition of adenosine monophosphate (AMP) or uridine monophosphate (UMP) to a protein, resulting in modifications known as AMPylation and UMPylation. The polypeptide is Protein nucleotidyltransferase YdiU (Shewanella sp. (strain MR-4)).